We begin with the raw amino-acid sequence, 1558 residues long: ABC transporter NFT1 (1558 aa).

At 1–29 (MIKNGTCPFWERDDLSECARREYIEFKFP) the chain is on the extracellular side. Residue asparagine 4 is glycosylated (N-linked (GlcNAc...) asparagine). Residues 30–50 (LFILLTGMIYAFCKVFRAFYL) traverse the membrane as a helical segment. The Cytoplasmic segment spans residues 51–103 (RRKNHTNEAPEFEEQGNGNHEYARFSVLRLKSAWESRSFCNVNNRSTFDKFKK). Residues 104–124 (FIEGAFIVLQLTIHLYILSNM) form a helical membrane-spanning segment. Over 125–130 (PMDNKK) the chain is Extracellular. The helical transmembrane segment at 131 to 151 (FFHQGFLVQMFLWILLLVVIT) threads the bilayer. Topologically, residues 152–169 (LRLISASQSFRWVLACKR) are cytoplasmic. A helical transmembrane segment spans residues 170-190 (DLWAVSFYSYASLFTLSILPL). Topologically, residues 191–201 (RSVFIGKIKDK) are extracellular. Residues 202–222 (IMVKYIISETFIDLALLLLLS) form a helical membrane-spanning segment. Topologically, residues 223–302 (TSSIEGTRYS…SSKKGRLLPN (80 aa)) are cytoplasmic. The helical transmembrane segment at 303 to 323 (IICYFKAVFISQLFLAFVSSF) threads the bilayer. The ABC transmembrane type-1 1 domain occupies 311–621 (FISQLFLAFV…IASTVSLLIQ (311 aa)). At 324–351 (LNFVPSLLMPRILSYVNDPKSQSWNLVS) the chain is on the extracellular side. A helical transmembrane segment spans residues 352–374 (LYVSSMLVSKIIATTCRGQGLFL). Topologically, residues 375–449 (GEKGTMQLRT…VMSIDAFKVS (75 aa)) are cytoplasmic. The disordered stretch occupies residues 410-434 (NASTSFEENPDSSEAEPRKKSSRKD). A compositionally biased stretch (basic and acidic residues) spans 424–434 (AEPRKKSSRKD). A helical transmembrane segment spans residues 450–470 (EAMNTFYLACEAVFMTVTALM). The Extracellular portion of the chain corresponds to 471 to 481 (ILYSLLGWSAF). Residues 482-504 (AGTFALLAMIPLNFWCATFYGNY) form a helical membrane-spanning segment. Over 505–558 (QADQLILTDKRTSGISEALNSIRVIKLLAWENLFYQKIINVRDGEIRLLKKKAT) the chain is Cytoplasmic. Residues 559-579 (IFFLNHLIWFFGPTLVSAITF) form a helical membrane-spanning segment. At 580-584 (SVFIK) the chain is on the extracellular side. Residues 585-605 (FQNQTLTPTIAFTALSLFAIL) form a helical membrane-spanning segment. At 606-953 (RTPMDQIAST…KFSAYKWLAD (348 aa)) the chain is on the cytoplasmic side. Residues 651–892 (FGFEDASMEW…NEFLRESINN (242 aa)) form the ABC transporter 1 domain. 686–693 (GPTGSGKS) serves as a coordination point for ATP. Positions 892–901 (NDSKNTTHNQ) are enriched in polar residues. The segment at 892–926 (NDSKNTTHNQIDLKRSTTSKKTKNGDPEGENSQDE) is disordered. Residues 954–974 (YFGGLGVVFVFTSSAILIHGI) traverse the membrane as a helical segment. Positions 961-1251 (VFVFTSSAIL…IIKVFSSVEL (291 aa)) constitute an ABC transmembrane type-1 2 domain. The Extracellular segment spans residues 975–1013 (TLSQGFWLRYWLETGSSGSKSTWLYRIVEGHSNIYFILT). A helical transmembrane segment spans residues 1014-1034 (YIVIGFVSSFLTSGKVWIAII). The Cytoplasmic portion of the chain corresponds to 1035-1082 (SGTNVTKKIFAKLLSSILYAKLRFHNVTPTGRIMNRFSKDMDIIDQQL). Residues 1083–1105 (IPNFEGLSYSVVVCLWIILLIGY) traverse the membrane as a helical segment. The Extracellular segment spans residues 1106-1109 (VTPQ). The chain crosses the membrane as a helical span at residues 1110-1132 (FLLFAIPLCALYYTVCTLYLRAS). Residues 1133–1199 (RELKRIDNIN…ATEWITYRVD (67 aa)) are Cytoplasmic-facing. Residues 1200–1220 (IIGTLVLFSSSVMIIMKASYL) form a helical membrane-spanning segment. Residues 1221–1222 (DA) are Extracellular-facing. Residues 1223–1243 (GLAGILLSNAFSFTETAQWII) form a helical membrane-spanning segment. At 1244 to 1558 (KVFSSVELLM…LAKVSFDNKR (315 aa)) the chain is on the cytoplasmic side. In terms of domain architecture, ABC transporter 2 spans 1285–1538 (VELKNLSLRY…RNTIFYRLCR (254 aa)). ATP is bound at residue 1319–1326 (GRTGAGKS).

Belongs to the ABC transporter superfamily. ABCC family. Conjugate transporter (TC 3.A.1.208) subfamily.

The protein resides in the membrane. This chain is ABC transporter NFT1 (NFT1), found in Saccharomyces cerevisiae (strain YJM789) (Baker's yeast).